The following is a 319-amino-acid chain: Cobalamin biosynthesis protein CobD (319 aa).

Transmembrane regions (helical) follow at residues 54-76, 154-173, and 301-318; these read VLLL…WLSY, GVTA…ALLY, and VLGF…IYAI.

This sequence belongs to the CobD/CbiB family.

The protein resides in the cell membrane. The protein operates within cofactor biosynthesis; adenosylcobalamin biosynthesis. Converts cobyric acid to cobinamide by the addition of aminopropanol on the F carboxylic group. The chain is Cobalamin biosynthesis protein CobD from Halalkalibacterium halodurans (strain ATCC BAA-125 / DSM 18197 / FERM 7344 / JCM 9153 / C-125) (Bacillus halodurans).